A 265-amino-acid chain; its full sequence is 4-hydroxy-tetrahydrodipicolinate reductase (265 aa).

NAD(+)-binding positions include 7–12 (GASGRM) and D33. R34 serves as a coordination point for NADP(+). Residues 96–98 (GTT) and 120–123 (ASNF) contribute to the NAD(+) site. H153 functions as the Proton donor/acceptor in the catalytic mechanism. H154 is a (S)-2,3,4,5-tetrahydrodipicolinate binding site. Catalysis depends on K157, which acts as the Proton donor. 163-164 (GT) lines the (S)-2,3,4,5-tetrahydrodipicolinate pocket.

The protein belongs to the DapB family.

The protein localises to the cytoplasm. The catalysed reaction is (S)-2,3,4,5-tetrahydrodipicolinate + NAD(+) + H2O = (2S,4S)-4-hydroxy-2,3,4,5-tetrahydrodipicolinate + NADH + H(+). The enzyme catalyses (S)-2,3,4,5-tetrahydrodipicolinate + NADP(+) + H2O = (2S,4S)-4-hydroxy-2,3,4,5-tetrahydrodipicolinate + NADPH + H(+). Its pathway is amino-acid biosynthesis; L-lysine biosynthesis via DAP pathway; (S)-tetrahydrodipicolinate from L-aspartate: step 4/4. In terms of biological role, catalyzes the conversion of 4-hydroxy-tetrahydrodipicolinate (HTPA) to tetrahydrodipicolinate. This Paraburkholderia phymatum (strain DSM 17167 / CIP 108236 / LMG 21445 / STM815) (Burkholderia phymatum) protein is 4-hydroxy-tetrahydrodipicolinate reductase.